Here is a 466-residue protein sequence, read N- to C-terminus: Asparagine--tRNA ligase (466 aa).

The protein belongs to the class-II aminoacyl-tRNA synthetase family. In terms of assembly, homodimer.

It localises to the cytoplasm. It carries out the reaction tRNA(Asn) + L-asparagine + ATP = L-asparaginyl-tRNA(Asn) + AMP + diphosphate + H(+). The polypeptide is Asparagine--tRNA ligase (Serratia proteamaculans (strain 568)).